The chain runs to 109 residues: Nucleoid-associated protein Spea_1509 (109 aa).

Residues 87–109 (NQKEKMAEVTGGMQLPPGMKMPF) form a disordered region.

This sequence belongs to the YbaB/EbfC family. In terms of assembly, homodimer.

It is found in the cytoplasm. Its subcellular location is the nucleoid. Functionally, binds to DNA and alters its conformation. May be involved in regulation of gene expression, nucleoid organization and DNA protection. This is Nucleoid-associated protein Spea_1509 from Shewanella pealeana (strain ATCC 700345 / ANG-SQ1).